The sequence spans 382 residues: uncharacterized protein (382 aa).

11 helical membrane passes run 8–28, 41–61, 73–93, 94–114, 133–153, 157–177, 208–228, 235–255, 274–294, 325–345, and 349–369; these read VLLL…LNTL, WQVG…TLIA, SYHC…LTVD, FWSW…IWVI, AAYM…LGIV, LLSV…PLLF, GCII…LYLS, ASVG…QWPM, VVIL…ALFI, ALLM…SLLM, and SDNL…MMLL.

It belongs to the major facilitator superfamily. YcaD (TC 2.A.1.26) family.

The protein resides in the cell inner membrane. This is an uncharacterized protein from Yersinia pseudotuberculosis serotype IB (strain PB1/+).